The sequence spans 550 residues: Atherin (550 aa).

The span at 1–11 shows a compositional bias: pro residues; sequence MAGPPALPPPE. Disordered regions lie at residues 1 to 32 and 93 to 468; these read MAGPPALPPPETAAAATTAAAAASSSAASPHY and SYRN…KEKP. A compositionally biased stretch (low complexity) spans 12–30; it reads TAAAATTAAAAASSSAASP. Residues 24-100 form the SAMD1-like winged helix (WH) domain; it reads SSSAASPHYQ…SISYRNAARV (77 aa). Threonine 108 carries the phosphothreonine modification. Residues 125–138 show a composition bias toward pro residues; the sequence is APPPTPAPPPPPAP. A compositionally biased stretch (low complexity) spans 139 to 160; sequence VAAAAAPARAPRAAAAAAAATA. A Phosphoserine modification is found at serine 163. The span at 170–179 shows a compositional bias: low complexity; that stretch reads GPRAQRAAPL. Composition is skewed to pro residues over residues 180–205 and 214–245; these read AAPPPAPAAPPAAAPPAGPRRAPPPA and PLPPPPQPPAPPQQQQQPPPPPPPQQPQPPPE. Residues 246–257 are compositionally biased toward low complexity; it reads GGAARAGGPARP. At serine 270 the chain carries Phosphoserine. A compositionally biased stretch (basic and acidic residues) spans 290 to 300; it reads AAARGRLERTR. Residues 337 to 355 are compositionally biased toward acidic residues; sequence KEEEEEEEEDDEDDDDDVV. The segment covering 437 to 448 has biased composition (pro residues); the sequence is SPSPVPLPPGKP. One can recognise an SAM domain in the interval 474-542; the sequence is WTVMDVVEYF…KVLQQGHFED (69 aa).

As to quaternary structure, homopolymerize into a closed pentameric ring. Interacts (via SAM domain) with L3MBTL3 (via SAM domain); the interaction mediates L3MBTL3 binding to chromatin. Interacts (via WH domain) with KDM1A; the interaction modulates KDM1A function.

The protein localises to the nucleus. It localises to the chromosome. It is found in the secreted. Unmethylated CpG islands (CGIs)-binding protein which localizes to H3K4me3-decorated CGIs, where it acts as a transcriptional repressor. Tethers L3MBTL3 to chromatin and interacts with the KDM1A histone demethylase complex to modulate H3K4me2 and H3K4me3 levels at CGIs. Plays a role in atherogenesis by binding with LDL on cell surface and promoting LDL oxidation which leads to the formation of foam cell. This Oryctolagus cuniculus (Rabbit) protein is Atherin (SAMD1).